The primary structure comprises 760 residues: Acetyl-CoA decarbonylase/synthase complex subunit alpha 1 (760 aa).

[4Fe-4S] cluster is bound by residues Cys56, Cys59, Cys60, Cys62, Cys67, and Cys77. Residue His100 coordinates CO. Residues His231, Cys259, and Cys298 each coordinate [Ni-4Fe-4S] cluster. 4Fe-4S ferredoxin-type domains follow at residues 381 to 410 and 418 to 450; these read KKLQKEAKRCLGCGDCERVCPNDLPIVEAM and FEGLADLFDRCVGCARCESECPTKLRVMNMIED. [4Fe-4S] cluster-binding residues include Cys390, Cys393, Cys396, Cys400, Cys428, Cys431, Cys434, and Cys438. Residues Cys496, Cys525, and Cys560 each coordinate [Ni-4Fe-4S] cluster.

The protein belongs to the Ni-containing carbon monoxide dehydrogenase family. Heterotetramer of two alpha and two epsilon subunits. The ACDS complex is made up of alpha, epsilon, beta, gamma and delta subunits with a probable stoichiometry of (alpha(2)epsilon(2))(4)-beta(8)-(gamma(1)delta(1))(8). [4Fe-4S] cluster is required as a cofactor. It depends on [Ni-4Fe-4S] cluster as a cofactor.

The enzyme catalyses CO + 2 oxidized [2Fe-2S]-[ferredoxin] + H2O = 2 reduced [2Fe-2S]-[ferredoxin] + CO2 + 2 H(+). In terms of biological role, part of the ACDS complex that catalyzes the reversible cleavage of acetyl-CoA, allowing autotrophic growth from CO(2). The alpha-epsilon subcomponent functions as a carbon monoxide dehydrogenase. The sequence is that of Acetyl-CoA decarbonylase/synthase complex subunit alpha 1 from Methanopyrus kandleri (strain AV19 / DSM 6324 / JCM 9639 / NBRC 100938).